The primary structure comprises 326 residues: Ig gamma-1 chain C region (326 aa).

Residues 1–97 (AETTAPSVYP…ASSTKVDKKI (97 aa)) form a CH1 region. Residues C27 and C82 are joined by a disulfide bond. The hinge stretch occupies residues 98 to 112 (VPRNCGGDCKPCICT). Positions 113 to 219 (GSEVSSVFIF…PIEKTISKPE (107 aa)) are CH2. 2 disulfides stabilise this stretch: C140-C200 and C246-C304. N176 carries an N-linked (GlcNAc...) asparagine glycan. Positions 220 to 326 (GRTQVPHVYT…EKSLSHSPGK (107 aa)) are CH3.

This chain is Ig gamma-1 chain C region, found in Rattus norvegicus (Rat).